Consider the following 963-residue polypeptide: Protein translocase subunit SecA (963 aa).

ATP contacts are provided by residues Gln-87, 105–109 (GEGKT), and Asp-524. Cys-946, Cys-948, Cys-957, and His-958 together coordinate Zn(2+).

This sequence belongs to the SecA family. As to quaternary structure, monomer and homodimer. Part of the essential Sec protein translocation apparatus which comprises SecA, SecYEG and auxiliary proteins SecDF-YajC and YidC. The cofactor is Zn(2+).

Its subcellular location is the cell inner membrane. It is found in the cytoplasm. It catalyses the reaction ATP + H2O + cellular proteinSide 1 = ADP + phosphate + cellular proteinSide 2.. Its function is as follows. Part of the Sec protein translocase complex. Interacts with the SecYEG preprotein conducting channel. Has a central role in coupling the hydrolysis of ATP to the transfer of proteins into and across the cell membrane, serving both as a receptor for the preprotein-SecB complex and as an ATP-driven molecular motor driving the stepwise translocation of polypeptide chains across the membrane. The chain is Protein translocase subunit SecA from Methylobacterium radiotolerans (strain ATCC 27329 / DSM 1819 / JCM 2831 / NBRC 15690 / NCIMB 10815 / 0-1).